A 474-amino-acid polypeptide reads, in one-letter code: Probable multidrug resistance protein NorM (474 aa).

The next 12 membrane-spanning stretches (helical) occupy residues 33 to 50, 65 to 87, 108 to 130, 150 to 172, 179 to 201, 211 to 233, 258 to 280, 295 to 317, 334 to 356, 376 to 398, 410 to 432, and 436 to 458; these read LWLA…IAMM, VAAA…GLVS, SLRV…QLYG, YLDG…GLMG, PALW…LIHG, FGAG…VVCV, LLQL…GAAA, QIAL…AATV, AGFA…VALT, TLTA…QVVA, VPLL…VLGF, and LGPF…LLVW.

It belongs to the multi antimicrobial extrusion (MATE) (TC 2.A.66.1) family.

The protein resides in the cell inner membrane. Functionally, multidrug efflux pump. The protein is Probable multidrug resistance protein NorM (norM) of Rhodopseudomonas palustris (strain ATCC BAA-98 / CGA009).